We begin with the raw amino-acid sequence, 356 residues long: MKKSDFHYELPEELIAQAPLAERAASRLLVVPPAPAAFGDRQVRDLPELLQPGDLLIFNDTRVIPARLFGQKASGGRVEILIERLLGEREARVQIGASKSPKAGSVIALDAGGQAEVLGRDGEFYLLRFQIPTPLEHWLLEAGRLPLPPYIRREPGVEDRERYQTVFAREVGAVAAPTAGLHFDEPLLARLRERGVEFGHVTLHVGAGTFQPVRVDKLDQHVMHKEWLNVGATLVEQVRRTRARGGRVIAVGTTVVRSLESAWRKTEAAPEGELQPFAGETQIFILPGYRIRSVDAMVTNFHLPESTLMMMVCAFAGRERIFAAYHHAIAQRYRFFSYGDAMLLWGGESGVGNGES.

This sequence belongs to the QueA family. In terms of assembly, monomer.

Its subcellular location is the cytoplasm. It carries out the reaction 7-aminomethyl-7-carbaguanosine(34) in tRNA + S-adenosyl-L-methionine = epoxyqueuosine(34) in tRNA + adenine + L-methionine + 2 H(+). It participates in tRNA modification; tRNA-queuosine biosynthesis. Transfers and isomerizes the ribose moiety from AdoMet to the 7-aminomethyl group of 7-deazaguanine (preQ1-tRNA) to give epoxyqueuosine (oQ-tRNA). The polypeptide is S-adenosylmethionine:tRNA ribosyltransferase-isomerase (Xanthomonas euvesicatoria pv. vesicatoria (strain 85-10) (Xanthomonas campestris pv. vesicatoria)).